The primary structure comprises 114 residues: MIVVKFCPKCNSMMVPKKSNGKNVYRCTKCGYEKEVPETTIVVTSKVKHSIKEKTLVLEEEEMPSGAQKIKGVLCPSCKNDEAYFWILQTRRADEPPTRFYKCTKCGKVWREYE.

The interval 1-43 (MIVVKFCPKCNSMMVPKKSNGKNVYRCTKCGYEKEVPETTIVV) is N-ZR. Zn(2+)-binding residues include Cys7, Cys10, Cys27, Cys30, Cys75, and Cys78. The segment at 63–114 (MPSGAQKIKGVLCPSCKNDEAYFWILQTRRADEPPTRFYKCTKCGKVWREYE) is C-ZR. The TFIIS-type zinc finger occupies 71 to 111 (KGVLCPSCKNDEAYFWILQTRRADEPPTRFYKCTKCGKVWR). Residues Asp94 and Glu95 contribute to the active site. The Zn(2+) site is built by Cys103 and Cys106.

The protein belongs to the archaeal RpoM/eukaryotic RPA12/RPB9/RPC11 RNA polymerase family. Interacts with RNA polymerase; probably competes with TFS4 for the same binding site. It depends on Zn(2+) as a cofactor.

Its function is as follows. Induces RNA cleavage activity in the RNA polymerase. Induces rapid cleavage of a stalled transcription elongation complex with a 2-nucleotide reduction at the 3' end of the nascent RNA. Truncated RNA is able to resume elongation. During transcription elongation it enhances processivity. Involved in transcriptional proofreading and fidelity. Misincorporation of nucleotides during elongation of transcription leads to arrested elongation complexes which are rescued by TFS-promoted removal of a dinucleotide from the 3'-end. TFS1 is able to induce a cleavage resynthesis cycle in stalled elongation complexes (resulting from the next missing nucleotide or a reduced incorporation rate of a wrong nucleotide) preventing misincorporation and enabling proofreading in a post-incorporation manner. Pausing of elongation complexes is the main determinant of TFS-induced RNA cleavage. The protein is Transcription factor S1 of Saccharolobus solfataricus (strain ATCC 35092 / DSM 1617 / JCM 11322 / P2) (Sulfolobus solfataricus).